Consider the following 109-residue polypeptide: Period circadian protein (109 aa).

The tract at residues 29 to 100 (ITAPVDVDPH…TGTSSGSVQL (72 aa)) is disordered. Residues 69–97 (SGNFNSGSNLHIGSITNTSNTGTGTSSGS) are compositionally biased toward low complexity.

As to quaternary structure, forms a heterodimer with timeless (TIM); the complex then translocates into the nucleus. Post-translationally, phosphorylated with a circadian rhythmicity, probably by the double-time protein (dbt). Phosphorylation could be implicated in the stability of per monomer and in the formation of heterodimer per-tim.

The protein resides in the nucleus. The protein localises to the cytoplasm. It localises to the perinuclear region. Its function is as follows. Essential for biological clock functions. Determines the period length of circadian and ultradian rhythms; an increase in PER dosage leads to shortened circadian rhythms and a decrease leads to lengthened circadian rhythms. Essential for the circadian rhythmicity of locomotor activity, eclosion behavior, and for the rhythmic component of the male courtship song that originates in the thoracic nervous system. The biological cycle depends on the rhythmic formation and nuclear localization of the TIM-PER complex. Light induces the degradation of TIM, which promotes elimination of PER. Nuclear activity of the heterodimer coordinatively regulates PER and TIM transcription through a negative feedback loop. Behaves as a negative element in circadian transcriptional loop. Does not appear to bind DNA, suggesting indirect transcriptional inhibition. The polypeptide is Period circadian protein (per) (Loxocera albiseta (Rust fly)).